A 176-amino-acid polypeptide reads, in one-letter code: Thiol:disulfide interchange protein HelX (176 aa).

Positions Met1 to Ala19 are cleaved as a signal peptide. A Thioredoxin domain is found at Ala35–Ala172. Cysteines 75 and 78 form a disulfide.

Belongs to the thioredoxin family. DsbE subfamily.

The protein localises to the periplasm. In terms of biological role, required for disulfide bond formation in some periplasmic proteins. Also acts as a disulfide oxidoreductase in cytochromes c biogenesis. The cysteines of apocytochromes c must be in the reduced state for covalent linkage between the two moieties to occur. This chain is Thiol:disulfide interchange protein HelX (helX), found in Rhodobacter capsulatus (strain ATCC BAA-309 / NBRC 16581 / SB1003).